The primary structure comprises 283 residues: Polyamine aminopropyltransferase (283 aa).

The 234-residue stretch at Thr-5–Ser-238 folds into the PABS domain. Gln-32 contributes to the S-methyl-5'-thioadenosine binding site. 2 residues coordinate spermidine: His-63 and Asp-87. S-methyl-5'-thioadenosine-binding positions include Glu-107 and Asp-139–Gly-140. Asp-158 acts as the Proton acceptor in catalysis. Residue Asp-158–Asp-161 participates in spermidine binding.

This sequence belongs to the spermidine/spermine synthase family. In terms of assembly, homodimer or homotetramer.

The protein localises to the cytoplasm. The catalysed reaction is S-adenosyl 3-(methylsulfanyl)propylamine + putrescine = S-methyl-5'-thioadenosine + spermidine + H(+). Its pathway is amine and polyamine biosynthesis; spermidine biosynthesis; spermidine from putrescine: step 1/1. In terms of biological role, catalyzes the irreversible transfer of a propylamine group from the amino donor S-adenosylmethioninamine (decarboxy-AdoMet) to putrescine (1,4-diaminobutane) to yield spermidine. In Prochlorococcus marinus (strain MIT 9215), this protein is Polyamine aminopropyltransferase.